Here is a 134-residue protein sequence, read N- to C-terminus: Large ribosomal subunit protein uL22 (134 aa).

This sequence belongs to the universal ribosomal protein uL22 family. Part of the 50S ribosomal subunit.

This protein binds specifically to 23S rRNA; its binding is stimulated by other ribosomal proteins, e.g. L4, L17, and L20. It is important during the early stages of 50S assembly. It makes multiple contacts with different domains of the 23S rRNA in the assembled 50S subunit and ribosome. Its function is as follows. The globular domain of the protein is located near the polypeptide exit tunnel on the outside of the subunit, while an extended beta-hairpin is found that lines the wall of the exit tunnel in the center of the 70S ribosome. The polypeptide is Large ribosomal subunit protein uL22 (Gluconacetobacter diazotrophicus (strain ATCC 49037 / DSM 5601 / CCUG 37298 / CIP 103539 / LMG 7603 / PAl5)).